A 720-amino-acid polypeptide reads, in one-letter code: Inactive serine protease PAMR1 (720 aa).

Residues 1–21 (MELGCWTQLGLTFLQLLLISS) form the signal peptide. Intrachain disulfides connect cysteine 128–cysteine 150, cysteine 177–cysteine 199, cysteine 239–cysteine 250, cysteine 244–cysteine 260, cysteine 262–cysteine 271, cysteine 280–cysteine 329, cysteine 315–cysteine 342, and cysteine 414–cysteine 442. The CUB domain occupies 128-236 (CGQVLRAPKG…DGFHAIFEEI (109 aa)). The 38-residue stretch at 235-272 (EITACSSSPCFHDGTCVLDKAGSYKCACLAGYTGQRCE) folds into the EGF-like domain. Sushi domains lie at 278–344 (RNCS…ICIK) and 387–444 (APTK…SCIP). Residues 445–720 (ICGKIENVTA…FKDWIERNMK (276 aa)) form the Peptidase S1 domain. Asparagine 451 is a glycosylation site (N-linked (GlcNAc...) asparagine). Cysteine 489 and cysteine 505 form a disulfide bridge. Asparagine 614 is a glycosylation site (N-linked (GlcNAc...) asparagine). Cystine bridges form between cysteine 630/cysteine 649 and cysteine 661/cysteine 697.

The protein belongs to the peptidase S1 family.

The protein localises to the secreted. In terms of biological role, may play a role in regeneration of skeletal muscle. The sequence is that of Inactive serine protease PAMR1 (PAMR1) from Pongo abelii (Sumatran orangutan).